The primary structure comprises 146 residues: Large ribosomal subunit protein uL15 (146 aa).

Residues 1 to 46 are disordered; it reads MLHQIKPFKGARKTVKRLGRGCGSGTGKTSGKGHKGQLARSGGGVR. The span at 9-19 shows a compositional bias: basic residues; the sequence is KGARKTVKRLG. A compositionally biased stretch (gly residues) spans 20-30; sequence RGCGSGTGKTS.

This sequence belongs to the universal ribosomal protein uL15 family. As to quaternary structure, part of the 50S ribosomal subunit.

In terms of biological role, binds to the 23S rRNA. This Phytoplasma mali (strain AT) protein is Large ribosomal subunit protein uL15.